A 287-amino-acid polypeptide reads, in one-letter code: 2' cyclic ADP-D-ribose synthase BtTIR (287 aa).

Residues 155–287 (KQYDFFISHA…DDIVENLKNL (133 aa)) form the TIR domain. Glu-230 is a catalytic residue.

In terms of assembly, homodimer.

It carries out the reaction NAD(+) = 2'cADPR + nicotinamide + H(+). Functionally, NAD(+) hydrolase (NADase) that cleaves NAD(+) into nicotinamide and 2' cyclic ADP-D-ribose (2'cADPR). This is 2' cyclic ADP-D-ribose synthase BtTIR from Bacteroides thetaiotaomicron.